Consider the following 955-residue polypeptide: Glutamyl aminopeptidase (955 aa).

Topologically, residues 1–17 are cytoplasmic; sequence MDIEDKTSKMHCMKGKH. The chain crosses the membrane as a helical; Signal-anchor for type II membrane protein span at residues 18–38; it reads VVIICGVVIAVGLILGLGLGL. The Extracellular portion of the chain corresponds to 39–955; it reads GLDTKACNPP…LENSEHSNFA (917 aa). Asn118 and Asn192 each carry an N-linked (GlcNAc...) asparagine glycan. Glu218 lines the substrate pocket. Asn319 and Asn335 each carry an N-linked (GlcNAc...) asparagine glycan. 352–356 provides a ligand contact to substrate; it reads GAMEN. Residue His388 participates in Zn(2+) binding. Glu389 (proton acceptor) is an active-site residue. The Zn(2+) site is built by His392 and Glu411. Residues Asn458, Asn547, Asn584, Asn592, Asn674, Asn759, Asn823, and Asn836 are each glycosylated (N-linked (GlcNAc...) asparagine). Arg882 contacts substrate.

Belongs to the peptidase M1 family. As to quaternary structure, homodimer; disulfide-linked. Zn(2+) is required as a cofactor. Post-translationally, N-glycosylated. Glycosylation counts for an increased mass of about 32% of the protein mass (about 48 kDa).

The protein resides in the cell membrane. The catalysed reaction is Release of N-terminal glutamate (and to a lesser extent aspartate) from a peptide.. Its activity is regulated as follows. Substrate specificity is modulated by calcium which enhances the enzymatic activity for cleavage of acidic residues while reducing its activity with neutral and basic residues. Hydrolytic activity is inhibited by the aminopeptidase inhibitor (Leu and acidic inhibitor) amastatin, but not by bestatin (aminopeptidase inhibitor Leu inhibitor), leupeptin, pepstatin A and PMSF. Its hydrolytic activity is also strongly reduced by zinc ions, with a complete inhibition at 0.5 mM, and moderately inhibited by cobalt and copper ions. Functionally, venom protein that cleaves N-terminal acidic residues from peptides with high potency in presence of calcium. It may have several roles in venom including alteration of blood pressure by cleaving circulating angiotensin-2, general degradation of host tissue, increase of permeability to other venom components, and/or processing of other toxins in the venom. The protein is Glutamyl aminopeptidase of Bitis rhinoceros (West African gaboon viper).